A 1857-amino-acid polypeptide reads, in one-letter code: Peripheral-type benzodiazepine receptor-associated protein 1 (1857 aa).

3 disordered regions span residues 1–103 (MEQL…RPED), 284–321 (QRET…QEDA), and 565–629 (PKDL…DTAS). The segment covering 55–67 (LRSEESSKPKGDG) has biased composition (basic and acidic residues). Polar residues predominate over residues 87-96 (LGQQASSSGP). Pro residues predominate over residues 289–298 (PLPPSWPPGP). 2 stretches are compositionally biased toward low complexity: residues 299–316 (ALQA…GEAT) and 603–616 (SLSN…IHNS). Residues 653 to 720 (ARIQVFLARY…PSNFVERVSD (68 aa)) enclose the SH3 1 domain. The tract at residues 729–789 (PELADLSHSS…PSPEGLGEPP (61 aa)) is disordered. Over residues 755–764 (GGQSSVGRSQ) the composition is skewed to low complexity. Fibronectin type-III domains follow at residues 791–882 (VPYP…ARAG), 884–976 (VPSQ…TLPA), and 981–1081 (APLD…LAPA). Disordered stretches follow at residues 1083–1311 (LPAR…SDEE), 1330–1479 (FSIP…CSRG), and 1501–1601 (YDSE…RGVR). A compositionally biased stretch (low complexity) spans 1098–1116 (ARAPLASASPGPGDPSSPL). Residues 1138–1147 (EMAKGSHEDP) show a composition bias toward basic and acidic residues. The segment covering 1201 to 1218 (ASSSTQGARAQQAPNTEM) has biased composition (polar residues). Residues 1259–1274 (DIQEEEEEEEEEEEEE) are compositionally biased toward acidic residues. Over residues 1278 to 1292 (RTCSFQKQVAGNSIR) the composition is skewed to polar residues. Over residues 1333 to 1346 (PEEEEEEEEDEEEE) the composition is skewed to acidic residues. 2 stretches are compositionally biased toward basic and acidic residues: residues 1420-1429 (RPPDPREHCS) and 1554-1586 (AWEK…EARG). One can recognise an SH3 2 domain in the interval 1625–1693 (LPVRIFVALF…PCNMVAEVAV (69 aa)). Disordered stretches follow at residues 1723–1761 (VYST…VPSA) and 1823–1857 (SNFL…RVQC). Residues 1764–1831 (KAPHSMVAAF…PSNFLEGPGP (68 aa)) form the SH3 3 domain.

The protein belongs to the RIMBP family. As to quaternary structure, interacts with RIMS1 and RIMS2. Interacts with TSPO. Interacts with CACNA1A. Predominantly expressed in brain, pituitary gland and thymus in adults. In adult brain, highest expression found in temporal lobe and the putamen, followed by amygdala, caudate nucleus, cerebral cortex, occipital and frontal lobe. A high expression level is also observed in fetal tissues like brain, heart, kidney and thymus.

The protein resides in the cytoplasm. It is found in the mitochondrion. Required for synaptic transmission regulation. It probably controls the recruitement of voltage-gated calcium channels to the presynaptic membrane, and modulates neurotransmitter release. The sequence is that of Peripheral-type benzodiazepine receptor-associated protein 1 from Homo sapiens (Human).